The following is a 367-amino-acid chain: Protein RecA (367 aa).

Polar residues predominate over residues 1–14 (MSTEVNANQSPNAE). Positions 1–24 (MSTEVNANQSPNAESRQEAARSGE) are disordered. A compositionally biased stretch (basic and acidic residues) spans 15 to 24 (SRQEAARSGE). Position 84 to 91 (84 to 91 (GPESSGKT)) interacts with ATP. The tract at residues 348-367 (GSEVSSNSMRPLTTANRKAA) is disordered. Residues 349 to 367 (SEVSSNSMRPLTTANRKAA) are compositionally biased toward polar residues.

It belongs to the RecA family.

The protein localises to the cytoplasm. Functionally, can catalyze the hydrolysis of ATP in the presence of single-stranded DNA, the ATP-dependent uptake of single-stranded DNA by duplex DNA, and the ATP-dependent hybridization of homologous single-stranded DNAs. It interacts with LexA causing its activation and leading to its autocatalytic cleavage. This is Protein RecA from Prochlorococcus marinus (strain MIT 9211).